A 692-amino-acid chain; its full sequence is Sodium- and chloride-dependent glycine transporter 1 (692 aa).

The disordered stretch occupies residues 1–34 (MIGGDTRAASAHPGMASAQGPVATPSPEQPFPGT). Residues 1-94 (MIGGDTRAAS…TRGNWGNQIE (94 aa)) lie on the Cytoplasmic side of the membrane. A run of 3 helical transmembrane segments spans residues 95 to 115 (FVLTSVGYAVGLGNVWRFPYL), 122 to 142 (GAFMFPYFIMLIFCGIPLFFM), and 174 to 194 (VSTYIGIYYNVVICIAFYYFF). Over 195 to 271 (SSMTHVLPWA…LSDDIGNFGE (77 aa)) the chain is Extracellular. A run of 9 helical transmembrane segments spans residues 272 to 292 (VRLPLLGCLGVSWVVVFLCLI), 301 to 321 (VVYFTATFPYVVLTILFVRGV), 346 to 366 (VWGDAASQIFYSLGCAWGGLI), 393 to 413 (SVYAGFVIFSILGFMANHLGV), 436 to 456 (LLPISPLWSLLFFFMLILLGL), 492 to 512 (VAGFLLGIPLTSQAGIYWLLL), 516 to 536 (YAASFSLVVISCIMCVSIMYI), 556 to 576 (LFFQICWRFVSPAIIFFILIF), and 596 to 616 (VAIGFLMALSSVICIPLYALF). Over 617–692 (QLCRTDGDTL…GSSRFQDSRI (76 aa)) the chain is Cytoplasmic. Residue T657 is modified to Phosphothreonine. S659 and S684 each carry phosphoserine. Residues 681–692 (SNGSSRFQDSRI) form an essential for interaction with EXOC1 region.

Belongs to the sodium:neurotransmitter symporter (SNF) (TC 2.A.22) family. SLC6A9 subfamily. In terms of assembly, interacts with EXOC1; interaction increases the transporter capacity of SLC6A9 probably by promoting its insertion into the cell membrane. Interacts with EXOC3 and EXOC4. As to expression, expressed in the brain (at protein level). At 11 dpc, expressed in the ventral part of the ventricular zone. At 15 dpc, also expressed in adjacent mantle tissue and the meninges. Strongly expressed in 12 dpc and 15 dpc liver. Expressed in the brain.

The protein localises to the cell membrane. It catalyses the reaction glycine(out) + chloride(out) + 2 Na(+)(out) = glycine(in) + chloride(in) + 2 Na(+)(in). In terms of biological role, sodium- and chloride-dependent glycine transporter which is essential for regulating glycine concentrations at inhibitory glycinergic synapses. Functionally, sodium- and chloride-dependent glycine transporter. The sequence is that of Sodium- and chloride-dependent glycine transporter 1 (Slc6a9) from Mus musculus (Mouse).